A 191-amino-acid chain; its full sequence is COP9 signalosome complex subunit 8 (191 aa).

Residues Met-6–Leu-179 enclose the PCI domain.

It belongs to the CSN8 family. As to quaternary structure, component of the CSN complex, probably composed of cops1, cops2, cops3, cops4, cops5, cops6, cops7, cops8 and cops9.

The protein localises to the cytoplasm. It localises to the nucleus. Its function is as follows. Component of the COP9 signalosome complex (CSN), a complex involved in various cellular and developmental processes. The CSN complex is an essential regulator of the ubiquitin (Ubl) conjugation pathway by mediating the deneddylation of the cullin subunits of E3 ligase complexes, leading to modify the Ubl ligase activity. The polypeptide is COP9 signalosome complex subunit 8 (cops8) (Danio rerio (Zebrafish)).